Here is a 491-residue protein sequence, read N- to C-terminus: Cobyric acid synthase (491 aa).

Residues 250–439 enclose the GATase cobBQ-type domain; it reads EVTIAVIRLP…LHGIFDNGAW (190 aa). Cys331 serves as the catalytic Nucleophile. Residue His431 is part of the active site.

Belongs to the CobB/CobQ family. CobQ subfamily.

It functions in the pathway cofactor biosynthesis; adenosylcobalamin biosynthesis. Its function is as follows. Catalyzes amidations at positions B, D, E, and G on adenosylcobyrinic A,C-diamide. NH(2) groups are provided by glutamine, and one molecule of ATP is hydrogenolyzed for each amidation. The chain is Cobyric acid synthase from Synechococcus sp. (strain ATCC 27144 / PCC 6301 / SAUG 1402/1) (Anacystis nidulans).